Reading from the N-terminus, the 64-residue chain is Large ribosomal subunit protein bL35 (64 aa).

Positions 1–26 (MPKMKTKSAAAKRFKTTKSGKIKRKQ) are enriched in basic residues. A disordered region spans residues 1 to 46 (MPKMKTKSAAAKRFKTTKSGKIKRKQAYTSHLAPNKTTKQKRHLRK).

It belongs to the bacterial ribosomal protein bL35 family.

This is Large ribosomal subunit protein bL35 from Mycoplasmoides gallisepticum (strain R(low / passage 15 / clone 2)) (Mycoplasma gallisepticum).